The sequence spans 186 residues: MSNTKHADVSKFLSYVLRHKPEAIGLTLNSGGWANIAELISCAAKDGRLLTREVIQSVVDNSDKKRFSISADGLSIRAAQGHSSAQVDMRYEPKVPPEFLYHGTATRFIDSINQQGLRPGSRQYVHLSADEATAITVGQRHGKPTVLKIKTLEMHQQGFIFYQADNGVWLTLTVPVPFIDSTPFID.

It belongs to the KptA/TPT1 family.

Removes the 2'-phosphate from RNA via an intermediate in which the phosphate is ADP-ribosylated by NAD followed by a presumed transesterification to release the RNA and generate ADP-ribose 1''-2''-cyclic phosphate (APPR&gt;P). May function as an ADP-ribosylase. The chain is Probable RNA 2'-phosphotransferase from Pectobacterium carotovorum subsp. carotovorum (strain PC1).